The following is a 535-amino-acid chain: Probable histone-arginine methyltransferase 1.3 (535 aa).

M1 carries the post-translational modification N-acetylmethionine. Residues 141 to 456 (EASSAKMYFH…QSYTIDLTLS (316 aa)) enclose the SAM-dependent MTase PRMT-type domain. Positions 158, 167, 191, 213, and 243 each coordinate S-adenosyl-L-methionine. Active-site residues include E257 and E266. S-adenosyl-L-methionine is bound at residue S271. Residues 494-517 (VAQEPPLQPQPELSTQQDIQTPND) form a disordered region. Positions 507–516 (STQQDIQTPN) are enriched in polar residues.

Belongs to the class I-like SAM-binding methyltransferase superfamily. Protein arginine N-methyltransferase family. In terms of assembly, interacts with PQT3 in the nucleus. In terms of processing, ubiquitinated by PQT3.

The protein localises to the nucleus. Its subcellular location is the cytoplasm. It carries out the reaction L-arginyl-[protein] + 2 S-adenosyl-L-methionine = N(omega),N(omega)-dimethyl-L-arginyl-[protein] + 2 S-adenosyl-L-homocysteine + 2 H(+). Its function is as follows. Methylates (mono- and asymmetric dimethylation) the guanidino nitrogens of arginyl residues in several proteins involved in DNA packaging, transcription regulation, and mRNA stability. Recruited to promoters upon gene activation, methylates histone H3 and activates transcription via chromatin remodeling. Positive regulator in the oxidative stress tolerance that promotes the expression of enzymes preventing oxidative stress such as APX1 and GPX1 by histone methylation (H3R17me2a). Confers tolerance to cadmium CdCl(2) and salt NaCl stresses. The polypeptide is Probable histone-arginine methyltransferase 1.3 (PRMT13) (Arabidopsis thaliana (Mouse-ear cress)).